A 384-amino-acid chain; its full sequence is Ferrochelatase, mitochondrial (384 aa).

Residue Cys-156 coordinates [2Fe-2S] cluster. Active-site residues include His-190 and Asn-343. Residues Cys-363, Cys-366, and Cys-371 each coordinate [2Fe-2S] cluster.

It belongs to the ferrochelatase family. Homodimer. Homotetramer. It depends on [2Fe-2S] cluster as a cofactor.

It localises to the mitochondrion inner membrane. It catalyses the reaction heme b + 2 H(+) = protoporphyrin IX + Fe(2+). The protein operates within porphyrin-containing compound metabolism; protoheme biosynthesis; protoheme from protoporphyrin-IX: step 1/1. Catalyzes the ferrous insertion into protoporphyrin IX. Terminal enzyme in heme biosynthesis. Contains four conserved cysteines that function as cluster ligands and play a crucial role in maintaining protein structure. The polypeptide is Ferrochelatase, mitochondrial (Drosophila melanogaster (Fruit fly)).